Consider the following 79-residue polypeptide: UPF0180 protein BCG9842_B3897 (79 aa).

This sequence belongs to the UPF0180 family.

This Bacillus cereus (strain G9842) protein is UPF0180 protein BCG9842_B3897.